The primary structure comprises 347 residues: GMP reductase (347 aa).

108 to 131 (ADFEKTKQILAQSPALNFVCIDVA) is a binding site for NADP(+). Residues glycine 181 and glycine 183 each coordinate K(+). Cysteine 186 (thioimidate intermediate) is an active-site residue. 216–239 (IVSDGGCTMPGDVAKAFGGGADFV) contacts NADP(+).

It belongs to the IMPDH/GMPR family. GuaC type 1 subfamily. As to quaternary structure, homotetramer.

It catalyses the reaction IMP + NH4(+) + NADP(+) = GMP + NADPH + 2 H(+). Its function is as follows. Catalyzes the irreversible NADPH-dependent deamination of GMP to IMP. It functions in the conversion of nucleobase, nucleoside and nucleotide derivatives of G to A nucleotides, and in maintaining the intracellular balance of A and G nucleotides. This chain is GMP reductase, found in Citrobacter koseri (strain ATCC BAA-895 / CDC 4225-83 / SGSC4696).